We begin with the raw amino-acid sequence, 146 residues long: Acidic phospholipase A2 D (146 aa).

The N-terminal stretch at 1 to 21 (MNPAHLLILAAVCVSPLGASS) is a signal peptide. The propeptide occupies 22 to 27 (NRPMPL). 7 cysteine pairs are disulfide-bonded: Cys-38–Cys-98, Cys-53–Cys-145, Cys-55–Cys-71, Cys-70–Cys-126, Cys-77–Cys-119, Cys-87–Cys-112, and Cys-105–Cys-117. Tyr-54, Gly-56, and Gly-58 together coordinate Ca(2+). His-74 is a catalytic residue. Asp-75 serves as a coordination point for Ca(2+). The active site involves Asp-120.

Belongs to the phospholipase A2 family. Group I subfamily. D49 sub-subfamily. Ca(2+) serves as cofactor. Expressed by the venom gland.

The protein resides in the secreted. The enzyme catalyses a 1,2-diacyl-sn-glycero-3-phosphocholine + H2O = a 1-acyl-sn-glycero-3-phosphocholine + a fatty acid + H(+). Functionally, PLA2 catalyzes the calcium-dependent hydrolysis of the 2-acyl groups in 3-sn-phosphoglycerides. The sequence is that of Acidic phospholipase A2 D from Naja sputatrix (Malayan spitting cobra).